The following is a 162-amino-acid chain: MQFDVTIEIPKGQRNKYEVDHETGRVRLDRYLYTPMAYPTDYGFIEDTLGDDGDPLDALVLLPQPVFPGVLVAARPVGMFRMVDEHGGDDKVLCVPAGDPRWDHVQDIGDVPAFELDAIKHFFVHYKDLEPGKFVKAADWVDRAEAEAEVQRSVERFKAGTH.

Mg(2+) is bound at residue Glu8. Substrate contacts are provided by Lys16, Arg30, and Tyr42. Asp52, Asp57, Asp84, and Asp89 together coordinate Mg(2+). Asp89 serves as the catalytic Proton acceptor. Substrate is bound at residue Tyr126.

The protein belongs to the PPase family. In terms of assembly, homohexamer. Mg(2+) is required as a cofactor.

It localises to the cytoplasm. The enzyme catalyses diphosphate + H2O = 2 phosphate + H(+). In terms of biological role, catalyzes the hydrolysis of inorganic pyrophosphate (PPi) forming two phosphate ions. This is Inorganic pyrophosphatase from Mycobacterium bovis (strain ATCC BAA-935 / AF2122/97).